Here is a 285-residue protein sequence, read N- to C-terminus: 2-dehydro-3-deoxyphosphooctonate aldolase (285 aa).

It belongs to the KdsA family.

The protein resides in the cytoplasm. The catalysed reaction is D-arabinose 5-phosphate + phosphoenolpyruvate + H2O = 3-deoxy-alpha-D-manno-2-octulosonate-8-phosphate + phosphate. Its pathway is carbohydrate biosynthesis; 3-deoxy-D-manno-octulosonate biosynthesis; 3-deoxy-D-manno-octulosonate from D-ribulose 5-phosphate: step 2/3. It functions in the pathway bacterial outer membrane biogenesis; lipopolysaccharide biosynthesis. The polypeptide is 2-dehydro-3-deoxyphosphooctonate aldolase (Acidovorax sp. (strain JS42)).